The sequence spans 583 residues: Extracellular serine/threonine protein kinase four-jointed (583 aa).

The Cytoplasmic portion of the chain corresponds to M1–C78. Residues L79 to F99 traverse the membrane as a helical; Signal-anchor for type II membrane protein segment. Topologically, residues G100–S583 are extracellular. Residues R179–Q222 are disordered. The span at K187–E199 shows a compositional bias: basic and acidic residues. Residues T206–S219 are compositionally biased toward low complexity. N310 and N379 each carry an N-linked (GlcNAc...) asparagine glycan. The disordered stretch occupies residues M384–T421. The N-linked (GlcNAc...) asparagine glycan is linked to N491.

The protein belongs to the FJX1/FJ family. Post-translationally, proteolytically cleaved to yield a secreted protein. As to expression, in the eye disk, expressed in a gradient ahead of the morphogenetic furrow, high at the equator and low at the poles of the eye. In the leg disk, expressed in concentric rings, possibly corresponding to segmental boundaries. In the wing disk, expression is localized in the wing pouch; low in peripheral regions and high towards the center.

The protein resides in the golgi apparatus membrane. It is found in the secreted. It catalyses the reaction L-seryl-[protein] + ATP = O-phospho-L-seryl-[protein] + ADP + H(+). The enzyme catalyses L-threonyl-[protein] + ATP = O-phospho-L-threonyl-[protein] + ADP + H(+). Golgi serine/threonine protein kinase required for intermediate growth in the proximal-distal axis. Phosphorylates specific residues within extracellular cadherin domains of Fat (ft) and Dachsous (ds) as they transit through the Golgi. Acts in ommatidial polarity determination as a secondary signal downstream of Notch, JAK/STAT and wingless. Also necessary for the initiation, up-regulation or maintenance of Notch ligand, Serrate (Ser) expression in legs, thereby participating in a feedback loop with N signaling. Sufficient for joint formation and growth in the leg. The chain is Extracellular serine/threonine protein kinase four-jointed from Drosophila melanogaster (Fruit fly).